We begin with the raw amino-acid sequence, 315 residues long: NAD-dependent protein lipoamidase sirtuin-4, mitochondrial (315 aa).

The N-terminal 29 residues, 1 to 29 (MRMSFGLTFKRTAKVHWRANFSQQCSLRS), are a transit peptide targeting the mitochondrion. The Deacetylase sirtuin-type domain occupies 38-315 (PPLDPEKVKE…GELLPLIDPR (278 aa)). NAD(+) is bound by residues 63–83 (GAGI…VGLY) and 144–147 (QNVD). Histidine 162 functions as the Proton acceptor in the catalytic mechanism. Cysteine 170, cysteine 173, cysteine 221, and cysteine 224 together coordinate Zn(2+). NAD(+)-binding positions include 261 to 263 (GSS), 287 to 289 (NIG), and cysteine 305.

It belongs to the sirtuin family. Class II subfamily. As to quaternary structure, interacts with GLUD1, IDE and SLC25A5. Interacts with DLAT and PDHX. Interacts with MCCC1 (via the biotin carboxylation domain). Interacts with PCCA and PC. It depends on Zn(2+) as a cofactor.

The protein localises to the mitochondrion matrix. It carries out the reaction N(6)-[(R)-lipoyl]-L-lysyl-[protein] + NAD(+) + H2O = 2''-O-lipoyl-ADP-D-ribose + nicotinamide + L-lysyl-[protein]. The enzyme catalyses N(6)-biotinyl-L-lysyl-[protein] + NAD(+) + H2O = 2''-O-biotinyl-ADP-D-ribose + nicotinamide + L-lysyl-[protein]. It catalyses the reaction N(6)-acetyl-L-lysyl-[protein] + NAD(+) + H2O = 2''-O-acetyl-ADP-D-ribose + nicotinamide + L-lysyl-[protein]. The catalysed reaction is L-cysteinyl-[protein] + NAD(+) = S-(ADP-D-ribosyl)-L-cysteinyl-[protein] + nicotinamide + H(+). In terms of biological role, acts as a NAD-dependent protein lipoamidase, biotinylase, deacetylase and ADP-ribosyl transferase. Catalyzes more efficiently removal of lipoyl- and biotinyl- than acetyl-lysine modifications. Inhibits the pyruvate dehydrogenase complex (PDH) activity via the enzymatic hydrolysis of the lipoamide cofactor from the E2 component, DLAT, in a phosphorylation-independent manner. Catalyzes the transfer of ADP-ribosyl groups onto target proteins, including mitochondrial GLUD1, inhibiting GLUD1 enzyme activity. Acts as a negative regulator of mitochondrial glutamine metabolism by mediating mono ADP-ribosylation of GLUD1: expressed in response to DNA damage and negatively regulates anaplerosis by inhibiting GLUD1, leading to block metabolism of glutamine into tricarboxylic acid cycle and promoting cell cycle arrest. In response to mTORC1 signal, SIRT4 expression is repressed, promoting anaplerosis and cell proliferation. Acts as a tumor suppressor. Also acts as a NAD-dependent protein deacetylase: mediates deacetylation of 'Lys-471' of MLYCD, inhibiting its activity, thereby acting as a regulator of lipid homeostasis. Does not seem to deacetylate PC. Controls fatty acid oxidation by inhibiting PPARA transcriptional activation. Impairs SIRT1-PPARA interaction probably through the regulation of NAD(+) levels. Down-regulates insulin secretion. The protein is NAD-dependent protein lipoamidase sirtuin-4, mitochondrial of Bos taurus (Bovine).